The chain runs to 998 residues: Protein Smaug (998 aa).

Over residues 1–37 (MKYATGTDNAMTSGISGQTNNSNSASNEMQPTTSTPT) the composition is skewed to polar residues. 3 disordered regions span residues 1–45 (MKYA…EATS), 50–69 (TATY…QSQP), and 329–370 (LCPA…GSSS). Residues 329–338 (LCPASGSRSS) show a composition bias toward low complexity. Ser-564 and Ser-575 each carry phosphoserine. The interaction with cup stretch occupies residues 583–763 (EFKPNYIKFH…KDLKFKLSKM (181 aa)). An SAM domain is found at 600–654 (GIGLWLKSLRLHKYIELFKNMTYEEMLLITEDFLQSVGVTKGASHKLALCIDKLK). 2 disordered regions span residues 773 to 892 (HVKP…MQQM) and 942 to 977 (NNGS…QQPK). Composition is skewed to polar residues over residues 801–822 (KSGS…NFSL) and 854–864 (HQPQYKSSSYP). Phosphoserine is present on Ser-971.

The protein belongs to the SMAUG family. In terms of assembly, interacts with oskar (osk). Binds to the 3'-UTR of nos. Interacts with cup, which in turn recruits eIF4-E, leading to an indirect interaction between smg and eIF4-E that prevents mRNA translation.

It is found in the cytoplasm. In terms of biological role, translation regulator that binds to the 3'-UTR of specific mRNAs such as nanos (nos) and prevent their translation. Prevents translation of unlocalized nos in the bulk cytoplasm via the recruitment of cup. This is Protein Smaug from Drosophila simulans (Fruit fly).